The chain runs to 393 residues: Xylose transport system permease protein XylH (393 aa).

At Met1–Ser24 the chain is on the periplasmic side. Residues Leu25–Trp45 traverse the membrane as a helical segment. The Cytoplasmic segment spans residues Thr46–Thr64. The helical transmembrane segment at Ala65 to Leu85 threads the bilayer. Residues Ser86–Asp102 lie on the Periplasmic side of the membrane. The helical transmembrane segment at Val103–Leu123 threads the bilayer. The Cytoplasmic portion of the chain corresponds to Gly124–Lys135. Residues Val136–Ile156 form a helical membrane-spanning segment. The Periplasmic segment spans residues Thr157–Ser175. Residues Tyr176 to Trp196 form a helical membrane-spanning segment. The Cytoplasmic segment spans residues Gln197–Ser214. A helical transmembrane segment spans residues Thr215–Leu235. The Periplasmic segment spans residues Asn236–Arg239. A helical transmembrane segment spans residues Gly240–Thr260. Residues Arg261–Arg287 lie on the Cytoplasmic side of the membrane. Residues Thr288–Ser308 traverse the membrane as a helical segment. The Periplasmic portion of the chain corresponds to Ser309–Gly312. Residues Ala313–Gly333 traverse the membrane as a helical segment. Residues Gly334–Ser336 are Cytoplasmic-facing. Residues Leu337–Leu357 traverse the membrane as a helical segment. The Periplasmic portion of the chain corresponds to Asp358–Asp365. A helical transmembrane segment spans residues Val366–Asp386. At Ser387–Ser393 the chain is on the cytoplasmic side.

Belongs to the binding-protein-dependent transport system permease family. AraH/RbsC subfamily.

It localises to the cell inner membrane. Part of the binding-protein-dependent transport system for D-xylose. Probably responsible for the translocation of the substrate across the membrane. The polypeptide is Xylose transport system permease protein XylH (xylH) (Escherichia coli O6:H1 (strain CFT073 / ATCC 700928 / UPEC)).